A 201-amino-acid chain; its full sequence is Holliday junction branch migration complex subunit RuvA (201 aa).

The tract at residues 1–61 (MIEFVKGTID…EDAFSLYGFS (61 aa)) is domain I. A domain II region spans residues 62–140 (TREEKALFTK…DVVPEMIDNL (79 aa)). The flexible linker stretch occupies residues 141 to 150 (FNHEARIEKQ). The tract at residues 151–201 (EAETALDEALEALRVLGYAEKEIKKVLPHLKEETALSTDQYVKKALQKLLK) is domain III.

Belongs to the RuvA family. As to quaternary structure, homotetramer. Forms an RuvA(8)-RuvB(12)-Holliday junction (HJ) complex. HJ DNA is sandwiched between 2 RuvA tetramers; dsDNA enters through RuvA and exits via RuvB. An RuvB hexamer assembles on each DNA strand where it exits the tetramer. Each RuvB hexamer is contacted by two RuvA subunits (via domain III) on 2 adjacent RuvB subunits; this complex drives branch migration. In the full resolvosome a probable DNA-RuvA(4)-RuvB(12)-RuvC(2) complex forms which resolves the HJ.

Its subcellular location is the cytoplasm. Functionally, the RuvA-RuvB-RuvC complex processes Holliday junction (HJ) DNA during genetic recombination and DNA repair, while the RuvA-RuvB complex plays an important role in the rescue of blocked DNA replication forks via replication fork reversal (RFR). RuvA specifically binds to HJ cruciform DNA, conferring on it an open structure. The RuvB hexamer acts as an ATP-dependent pump, pulling dsDNA into and through the RuvAB complex. HJ branch migration allows RuvC to scan DNA until it finds its consensus sequence, where it cleaves and resolves the cruciform DNA. In Bacillus velezensis (strain DSM 23117 / BGSC 10A6 / LMG 26770 / FZB42) (Bacillus amyloliquefaciens subsp. plantarum), this protein is Holliday junction branch migration complex subunit RuvA.